The sequence spans 585 residues: 3-hydroxy-3-methylglutaryl-coenzyme A reductase 1 (585 aa).

2 helical membrane passes run 38 to 58 (LYLTNAVFFTLFFSAVYFLLC) and 77 to 97 (EIVAILASVASFIYLLGFFGI). Positions 98–169 (DFVQSLVLRP…DEMPVTVMTE (72 aa)) are linker. The interval 170 to 585 (EDEEIIRSVV…SSKDVSKVSS (416 aa)) is catalytic. Glu264 (charge relay system) is an active-site residue. Asn328 carries an N-linked (GlcNAc...) asparagine glycan. Lys396 (charge relay system) is an active-site residue. Asn441 carries an N-linked (GlcNAc...) asparagine glycan. The Charge relay system role is filled by Asp472. His570 acts as the Proton donor in catalysis. An N-linked (GlcNAc...) asparagine glycan is attached at Asn574.

It belongs to the HMG-CoA reductase family.

It localises to the endoplasmic reticulum membrane. Its subcellular location is the mitochondrion membrane. It is found in the plastid membrane. The catalysed reaction is (R)-mevalonate + 2 NADP(+) + CoA = (3S)-3-hydroxy-3-methylglutaryl-CoA + 2 NADPH + 2 H(+). Its pathway is metabolic intermediate biosynthesis; (R)-mevalonate biosynthesis; (R)-mevalonate from acetyl-CoA: step 3/3. In terms of biological role, catalyzes the synthesis of mevalonate. The specific precursor of all isoprenoid compounds present in plants. This is 3-hydroxy-3-methylglutaryl-coenzyme A reductase 1 (HMG1) from Gossypium hirsutum (Upland cotton).